Reading from the N-terminus, the 150-residue chain is Infection structure-specific protein 24 (150 aa).

Its function is as follows. Involved in the development of infection structures. The germ tube elongates across the leaf surface of the infected plant until it recognizes a stomate. Physical stimuli provided by the stomate induce differentiation of the germ tube to form a series of infection structures involved in host colonization. The chain is Infection structure-specific protein 24 (INF24) from Uromyces appendiculatus (Rust fungus).